The chain runs to 257 residues: Small ribosomal subunit protein uS2 (257 aa).

The protein belongs to the universal ribosomal protein uS2 family.

The chain is Small ribosomal subunit protein uS2 from Bartonella quintana (strain Toulouse) (Rochalimaea quintana).